We begin with the raw amino-acid sequence, 306 residues long: Myb family transcription factor MOF1 (306 aa).

One can recognise an HTH myb-type domain in the interval 19–79; that stretch reads RSKVPRLRWT…HLQMYRCSRL (61 aa). The H-T-H motif DNA-binding region spans 50 to 75; that stretch reads PKLILQLMGVKGLTISHVKSHLQMYR.

Interacts with TPR1, TPR2 and TPR3. Expressed in roots, leaves, leaf sheaths, culms, panicles, lemmas, paleas, lodicules, stamens, and pistils.

It is found in the nucleus. Transcriptional repressor that plays a role in the regulation of organ identity and spikelet meristem determinacy. Interacts with the TPR corepressors to possibly repress the expression of downstream target genes. This chain is Myb family transcription factor MOF1, found in Oryza sativa subsp. japonica (Rice).